We begin with the raw amino-acid sequence, 164 residues long: Ribosome maturation factor RimP (164 aa).

This sequence belongs to the RimP family.

The protein localises to the cytoplasm. Required for maturation of 30S ribosomal subunits. The polypeptide is Ribosome maturation factor RimP (Cellvibrio japonicus (strain Ueda107) (Pseudomonas fluorescens subsp. cellulosa)).